Here is a 466-residue protein sequence, read N- to C-terminus: Cysteine--tRNA ligase (466 aa).

C28 contacts Zn(2+). Positions 30–40 match the 'HIGH' region motif; sequence PTVYNFFHIGN. 3 residues coordinate Zn(2+): C208, H233, and E237. The 'KMSKS' region signature appears at 265–269; sequence KMSKS. An ATP-binding site is contributed by K268.

The protein belongs to the class-I aminoacyl-tRNA synthetase family. In terms of assembly, monomer. The cofactor is Zn(2+).

Its subcellular location is the cytoplasm. The catalysed reaction is tRNA(Cys) + L-cysteine + ATP = L-cysteinyl-tRNA(Cys) + AMP + diphosphate. The protein is Cysteine--tRNA ligase of Clostridium perfringens (strain 13 / Type A).